We begin with the raw amino-acid sequence, 273 residues long: Hydroxyethylthiazole kinase (273 aa).

Residue methionine 47 participates in substrate binding. Positions 123 and 172 each coordinate ATP. Glycine 199 serves as a coordination point for substrate.

It belongs to the Thz kinase family. Mg(2+) serves as cofactor.

The enzyme catalyses 5-(2-hydroxyethyl)-4-methylthiazole + ATP = 4-methyl-5-(2-phosphooxyethyl)-thiazole + ADP + H(+). It functions in the pathway cofactor biosynthesis; thiamine diphosphate biosynthesis; 4-methyl-5-(2-phosphoethyl)-thiazole from 5-(2-hydroxyethyl)-4-methylthiazole: step 1/1. Catalyzes the phosphorylation of the hydroxyl group of 4-methyl-5-beta-hydroxyethylthiazole (THZ). In Ruminiclostridium cellulolyticum (strain ATCC 35319 / DSM 5812 / JCM 6584 / H10) (Clostridium cellulolyticum), this protein is Hydroxyethylthiazole kinase.